Consider the following 840-residue polypeptide: Probable alpha-glucuronidase A (840 aa).

Residues 1-19 (MWSGIPVFALLSSIGIAAA) form the signal peptide. N-linked (GlcNAc...) asparagine glycans are attached at residues Asn50, Asn149, Asn222, Asn262, Asn279, Asn310, Asn465, Asn527, Asn576, Asn610, Asn682, Asn723, and Asn732.

It belongs to the glycosyl hydrolase 67 family.

It localises to the secreted. It carries out the reaction an alpha-D-glucuronoside + H2O = D-glucuronate + an alcohol. Functionally, alpha-glucuronidase involved in the hydrolysis of xylan, a major structural heterogeneous polysaccharide found in plant biomass representing the second most abundant polysaccharide in the biosphere, after cellulose. Releases 4-O-methylglucuronic acid from xylan. The protein is Probable alpha-glucuronidase A (aguA) of Neosartorya fischeri (strain ATCC 1020 / DSM 3700 / CBS 544.65 / FGSC A1164 / JCM 1740 / NRRL 181 / WB 181) (Aspergillus fischerianus).